The primary structure comprises 351 residues: Glycerol-1-phosphate dehydrogenase [NAD(P)+] (351 aa).

NAD(+) is bound by residues 97 to 101 (GKVID) and 119 to 122 (TSPS). Substrate is bound at residue Asp124. Position 128 (Ser128) interacts with NAD(+). Asp171 lines the substrate pocket. Zn(2+) is bound by residues Asp171 and His251. Residue His255 participates in substrate binding. His267 is a Zn(2+) binding site.

The protein belongs to the glycerol-1-phosphate dehydrogenase family. Homodimer. It depends on Zn(2+) as a cofactor.

The protein resides in the cytoplasm. It catalyses the reaction sn-glycerol 1-phosphate + NAD(+) = dihydroxyacetone phosphate + NADH + H(+). It carries out the reaction sn-glycerol 1-phosphate + NADP(+) = dihydroxyacetone phosphate + NADPH + H(+). The protein operates within membrane lipid metabolism; glycerophospholipid metabolism. Functionally, catalyzes the NAD(P)H-dependent reduction of dihydroxyacetonephosphate (DHAP or glycerone phosphate) to glycerol 1-phosphate (G1P). The G1P thus generated is used as the glycerophosphate backbone of phospholipids in the cellular membranes of Archaea. This Saccharolobus islandicus (strain M.16.27) (Sulfolobus islandicus) protein is Glycerol-1-phosphate dehydrogenase [NAD(P)+].